We begin with the raw amino-acid sequence, 250 residues long: Isoprenyl transferase (250 aa).

Residue Asp27 is part of the active site. Asp27 is a binding site for Mg(2+). Substrate contacts are provided by residues Gly28–Arg31, Trp32, His48, and Ser76–Glu78. Catalysis depends on Asn79, which acts as the Proton acceptor. Substrate-binding positions include Phe80, Arg82, Arg199, and Arg205–Ser207. Glu218 contacts Mg(2+).

Belongs to the UPP synthase family. Homodimer. The cofactor is Mg(2+).

Catalyzes the condensation of isopentenyl diphosphate (IPP) with allylic pyrophosphates generating different type of terpenoids. The sequence is that of Isoprenyl transferase from Chlamydia caviae (strain ATCC VR-813 / DSM 19441 / 03DC25 / GPIC) (Chlamydophila caviae).